Consider the following 330-residue polypeptide: Aspartate--ammonia ligase (330 aa).

It belongs to the class-II aminoacyl-tRNA synthetase family. AsnA subfamily.

The protein resides in the cytoplasm. The catalysed reaction is L-aspartate + NH4(+) + ATP = L-asparagine + AMP + diphosphate + H(+). It participates in amino-acid biosynthesis; L-asparagine biosynthesis; L-asparagine from L-aspartate (ammonia route): step 1/1. The sequence is that of Aspartate--ammonia ligase from Edwardsiella ictaluri (strain 93-146).